Reading from the N-terminus, the 212-residue chain is Peroxisomal membrane protein 4 (212 aa).

The next 2 membrane-spanning stretches (helical) occupy residues 97-117 and 153-173; these read GETHQMHSFLAAFIGGLLLFG and WDPFPLHTAVIWGLVLWLFEY. Asn206 carries N-linked (GlcNAc...) asparagine glycosylation.

It belongs to the peroxisomal membrane protein PXMP2/4 family. In terms of assembly, interacts with PEX19.

The protein localises to the peroxisome membrane. The protein is Peroxisomal membrane protein 4 (Pxmp4) of Mus musculus (Mouse).